Here is a 154-residue protein sequence, read N- to C-terminus: MSILFYVMFLAYLRGVQGNSMDQRSLPEDSLNSLIIKLIQADILKNKLSKQMVDVKENYQSTLPKAEDSARESAKSEFQPVMVMGPELLWYQRRYNSSRFLLSDSIPLESPPLFLIEVHLANPMVNSRSPRRKRYAEHKSHRGEYSVCDSESLW.

An N-terminal signal peptide occupies residues 1-18; it reads MSILFYVMFLAYLRGVQG. A propeptide spanning residues 19–134 is cleaved from the precursor; the sequence is NSMDQRSLPE…VNSRSPRRKR (116 aa).

This sequence belongs to the NGF-beta family.

It localises to the secreted. In terms of biological role, seems to promote the survival of visceral and proprioceptive sensory neurons. In Cervus elaphus (Red deer), this protein is Neurotrophin-3 (NTF3).